The sequence spans 167 residues: Putative pre-16S rRNA nuclease (167 aa).

This sequence belongs to the YqgF nuclease family.

Its subcellular location is the cytoplasm. Its function is as follows. Could be a nuclease involved in processing of the 5'-end of pre-16S rRNA. The protein is Putative pre-16S rRNA nuclease of Streptomyces coelicolor (strain ATCC BAA-471 / A3(2) / M145).